The following is a 417-amino-acid chain: S-adenosylmethionine synthase (417 aa).

Residue histidine 16 coordinates ATP. Residue aspartate 18 participates in Mg(2+) binding. K(+) is bound at residue glutamate 44. Residues glutamate 57 and glutamine 100 each contribute to the L-methionine site. Positions 100-110 are flexible loop; that stretch reads QSPDIAQGVTS. ATP contacts are provided by residues 175-177, 251-252, aspartate 260, 266-267, alanine 283, and lysine 287; these read DGK, KF, and RK. Aspartate 260 serves as a coordination point for L-methionine. Residue lysine 291 participates in L-methionine binding.

Belongs to the AdoMet synthase family. Homotetramer; dimer of dimers. The cofactor is Mg(2+). It depends on K(+) as a cofactor.

The protein localises to the cytoplasm. It carries out the reaction L-methionine + ATP + H2O = S-adenosyl-L-methionine + phosphate + diphosphate. The protein operates within amino-acid biosynthesis; S-adenosyl-L-methionine biosynthesis; S-adenosyl-L-methionine from L-methionine: step 1/1. Catalyzes the formation of S-adenosylmethionine (AdoMet) from methionine and ATP. The overall synthetic reaction is composed of two sequential steps, AdoMet formation and the subsequent tripolyphosphate hydrolysis which occurs prior to release of AdoMet from the enzyme. This Picosynechococcus sp. (strain ATCC 27264 / PCC 7002 / PR-6) (Agmenellum quadruplicatum) protein is S-adenosylmethionine synthase.